A 1042-amino-acid polypeptide reads, in one-letter code: Putative type I restriction enzyme MjaIXP endonuclease subunit (1042 aa).

Positions 323–487 (GETPEDRRIG…FLVFGDYISA (165 aa)) constitute a Helicase ATP-binding domain. The DEAH box motif lies at 439-442 (DEAH). Residues 551–731 (LTEDYLSKVS…DIKVVIEEMK (181 aa)) enclose the Helicase C-terminal domain.

Belongs to the HsdR family. In terms of assembly, the type I restriction/modification system is composed of three polypeptides R, M and S.

The catalysed reaction is Endonucleolytic cleavage of DNA to give random double-stranded fragments with terminal 5'-phosphates, ATP is simultaneously hydrolyzed.. In terms of biological role, the restriction (R) subunit of a type I restriction enzyme that recognizes 5'-CCAN(5)GTR-3' and cleaves a random distance away. The R subunit is required for both nuclease and ATPase activities, but not for modification. After locating a non-methylated recognition site, the enzyme complex serves as a molecular motor that translocates DNA in an ATP-dependent manner until a collision occurs that triggers cleavage. In Methanocaldococcus jannaschii (strain ATCC 43067 / DSM 2661 / JAL-1 / JCM 10045 / NBRC 100440) (Methanococcus jannaschii), this protein is Putative type I restriction enzyme MjaIXP endonuclease subunit.